The chain runs to 402 residues: Flavohemoprotein (402 aa).

Residues 1 to 138 form the Globin domain; the sequence is MLSPEVRALV…LADLLIGRER (138 aa). Residue H85 coordinates heme b. Catalysis depends on charge relay system residues Y95 and E137. The tract at residues 149-402 is reductase; the sequence is GGWTGWRAFK…AEVFGTGGVA (254 aa). Residues 152–261 form the FAD-binding FR-type domain; it reads TGWRAFKVVR…SPPQGDFTLD (110 aa). Residues Y190 and 206–209 contribute to the FAD site; that span reads RQYS. An NADP(+)-binding site is contributed by 274–279; it reads GVGLTP. 395–398 is a binding site for FAD; it reads VFGT.

This sequence belongs to the globin family. Two-domain flavohemoproteins subfamily. It in the C-terminal section; belongs to the flavoprotein pyridine nucleotide cytochrome reductase family. The cofactor is heme b. It depends on FAD as a cofactor.

It catalyses the reaction 2 nitric oxide + NADPH + 2 O2 = 2 nitrate + NADP(+) + H(+). The enzyme catalyses 2 nitric oxide + NADH + 2 O2 = 2 nitrate + NAD(+) + H(+). Is involved in NO detoxification in an aerobic process, termed nitric oxide dioxygenase (NOD) reaction that utilizes O(2) and NAD(P)H to convert NO to nitrate, which protects the bacterium from various noxious nitrogen compounds. Therefore, plays a central role in the inducible response to nitrosative stress. The protein is Flavohemoprotein of Bordetella pertussis (strain Tohama I / ATCC BAA-589 / NCTC 13251).